The sequence spans 37 residues: Large ribosomal subunit protein bL36 (37 aa).

It belongs to the bacterial ribosomal protein bL36 family.

In Janthinobacterium sp. (strain Marseille) (Minibacterium massiliensis), this protein is Large ribosomal subunit protein bL36.